Reading from the N-terminus, the 663-residue chain is MENNLFKIHSDYKPTGDQPTAIDSIVKNIENGVKDQVLLGVTGSGKTFTIANVIERVQRPSLIIAPNKTLAAQLYSEYKKFFPENAVEYFVSYYDYYQPEAYIKTTDTYIEKDSSVNDEIDKLRNAATAALIHRRDVIIVASVSSIYGLGSPDTYRRMTIPIDKQTGISRKELMKRLIALRYDRNDVAFERGQFRIKGDVIDIYPSYMNNGYRLEYWGDDLEEISEINTLTGQKVKKNLERIVIYPATQYLTADDDKDRIIQEIKDDLKVEVKKFEDDKKLLEAQRLRQRTEYDLEMITEIGYCKGIENYSRYLAGKNPGDTPDTLFEYFPKDFLLFIDESHITVPQVRGMYNGDRARKESLVENGFRLKAALDNRPLRFEEFREKSNQTVFISATPGDFEVEVSDNHIAEQLIRPTGIVDPEIEIRPTKNQVDDLLDEIRKRAAKKERVLVTTLTKKIAEELTEYYIELGVKVKYMHSDIDTLERIEIIRALRKGEIDVIIGINLLREGLDIPEVSLVAIMEADKEGFLRSRRSLVQTIGRAARNVEGRVILYADIMTDSMKEAITETERRRKIQKEYNAYNHIDPKSIIKEIAEDLINLDYGIEEKKFENDKKVFRNKTDIEKEITKLEKKIKKLVEELDFEQAIILRDEMLKLKELLLEF.

One can recognise a Helicase ATP-binding domain in the interval Lys27–Ile414. Residue Gly40–Thr47 participates in ATP binding. The Beta-hairpin motif lies at Tyr93–Val116. The Helicase C-terminal domain occupies Gln432–Ile594. Residues Glu624–Leu659 form the UVR domain.

This sequence belongs to the UvrB family. Forms a heterotetramer with UvrA during the search for lesions. Interacts with UvrC in an incision complex.

It localises to the cytoplasm. In terms of biological role, the UvrABC repair system catalyzes the recognition and processing of DNA lesions. A damage recognition complex composed of 2 UvrA and 2 UvrB subunits scans DNA for abnormalities. Upon binding of the UvrA(2)B(2) complex to a putative damaged site, the DNA wraps around one UvrB monomer. DNA wrap is dependent on ATP binding by UvrB and probably causes local melting of the DNA helix, facilitating insertion of UvrB beta-hairpin between the DNA strands. Then UvrB probes one DNA strand for the presence of a lesion. If a lesion is found the UvrA subunits dissociate and the UvrB-DNA preincision complex is formed. This complex is subsequently bound by UvrC and the second UvrB is released. If no lesion is found, the DNA wraps around the other UvrB subunit that will check the other stand for damage. The sequence is that of UvrABC system protein B from Fusobacterium nucleatum subsp. nucleatum (strain ATCC 25586 / DSM 15643 / BCRC 10681 / CIP 101130 / JCM 8532 / KCTC 2640 / LMG 13131 / VPI 4355).